A 391-amino-acid chain; its full sequence is Paired box protein Pax-5 (391 aa).

The paired DNA-binding region spans 16–142; the sequence is GHGGVNQLGG…SSINRIIRTK (127 aa). The PAI subdomain stretch occupies residues 19–75; that stretch reads GVNQLGGVFVNGRPLPDVVRQRIVELAHQGVRPCDISRQLRVSHGCVSKILGRYYET. The RED subdomain stretch occupies residues 94-142; the sequence is KVVEKIAEYKRQNPTMFAWEIRDRLLAERVCDNDTVPSVSSINRIIRTK. The tract at residues 182–218 is disordered; it reads SGILGITSPSADTNKRKRDEGIQESPVPNGHSLPGRD.

In terms of assembly, interacts with ETS1; this interaction alters PAX5 DNA-binding properties. Binds DNA as a monomer. Interacts with TBP; this interaction allows PAX5 to interact with the basal transcription machinery. Interacts with RB1. Interacts with TLE4. Interacts with DAXX. In terms of processing, O-glycosylated. Phosphorylated by SYK. This phosphorylation plays an important role in the abolition of BLIMP1 repression by PAX5 in order to trigger plasma cell differentiation. Expressed in all B-lymphoid organs, in the embryonic midbrain and in adult testis.

It is found in the nucleus. Transcription factor that plays an essential role in commitment of lymphoid progenitors to the B-lymphocyte lineage. Fulfills a dual role by repressing B-lineage inappropriate genes and simultaneously activating B-lineage-specific genes. In turn, regulates cell adhesion and migration, induces V(H)-to-D(H)J(H) recombination, facilitates pre-B-cell receptor signaling and promotes development to the mature B-cell stage. Repression of the cohesin-release factor WAPL causes global changes of the chromosomal architecture in pro-B cells to facilitate the generation of a diverse antibody repertoire. The protein is Paired box protein Pax-5 (Pax5) of Mus musculus (Mouse).